A 202-amino-acid chain; its full sequence is Flagellar transcriptional regulator FlhC (202 aa).

The Zn(2+) site is built by C137, C140, C157, and C160.

Belongs to the FlhC family. As to quaternary structure, heterohexamer composed of two FlhC and four FlhD subunits. Each FlhC binds a FlhD dimer, forming a heterotrimer, and a hexamer assembles by dimerization of two heterotrimers. It depends on Zn(2+) as a cofactor.

The protein localises to the cytoplasm. Its function is as follows. Functions in complex with FlhD as a master transcriptional regulator that regulates transcription of several flagellar and non-flagellar operons by binding to their promoter region. Activates expression of class 2 flagellar genes, including fliA, which is a flagellum-specific sigma factor that turns on the class 3 genes. Also regulates genes whose products function in a variety of physiological pathways. The chain is Flagellar transcriptional regulator FlhC from Variovorax paradoxus (strain S110).